A 428-amino-acid polypeptide reads, in one-letter code: Tyrosine--tRNA ligase (428 aa).

Tyrosine 37 lines the L-tyrosine pocket. The 'HIGH' region motif lies at 42-51; that stretch reads PTGSSLHAGH. L-tyrosine is bound by residues tyrosine 175 and glutamine 179. A 'KMSKS' region motif is present at residues 235–239; sequence KFGKS. Lysine 238 contributes to the ATP binding site. The S4 RNA-binding domain maps to 358-415; sequence ATILDLLVESGLEKSKGAARRTVGEGGAYVNNQRIEDIEWSPSAEELLHGSWLVLRKG.

It belongs to the class-I aminoacyl-tRNA synthetase family. TyrS type 1 subfamily. As to quaternary structure, homodimer.

Its subcellular location is the cytoplasm. It carries out the reaction tRNA(Tyr) + L-tyrosine + ATP = L-tyrosyl-tRNA(Tyr) + AMP + diphosphate + H(+). Catalyzes the attachment of tyrosine to tRNA(Tyr) in a two-step reaction: tyrosine is first activated by ATP to form Tyr-AMP and then transferred to the acceptor end of tRNA(Tyr). The protein is Tyrosine--tRNA ligase of Corynebacterium jeikeium (strain K411).